A 388-amino-acid chain; its full sequence is Protochlorophyllide reductase A, chloroplastic (388 aa).

The transit peptide at 1 to 74 directs the protein to the chloroplast; it reads MALQLLPSTL…SPSGKKTLRQ (74 aa). Over residues 48-68 the composition is skewed to low complexity; it reads VATAPSPVTTSPGSTASSPSG. Residues 48 to 69 are disordered; it reads VATAPSPVTTSPGSTASSPSGK.

This sequence belongs to the short-chain dehydrogenases/reductases (SDR) family. POR subfamily.

It is found in the plastid. It localises to the chloroplast. It catalyses the reaction chlorophyllide a + NADP(+) = protochlorophyllide a + NADPH + H(+). The protein operates within porphyrin-containing compound metabolism; chlorophyll biosynthesis. In terms of biological role, phototransformation of protochlorophyllide (Pchlide) to chlorophyllide (Chlide). This is Protochlorophyllide reductase A, chloroplastic (PORA) from Hordeum vulgare (Barley).